The following is a 537-amino-acid chain: Tyrosine-protein kinase Fyn (537 aa).

Residue Gly2 is the site of N-myristoyl glycine attachment. Residues Cys3 and Cys6 are each lipidated (S-palmitoyl cysteine). The disordered stretch occupies residues 14-35 (LTEERDGSLNQSSGYRYGTDPT). Phosphoserine is present on residues Ser21 and Ser26. Positions 82–143 (TGVTLFVALY…PSNYVAPVDS (62 aa)) constitute an SH3 domain. Residues 149–246 (WYFGKLGRKD…GLCCRLVVPC (98 aa)) form the SH2 domain. At Tyr185 the chain carries Phosphotyrosine. The Protein kinase domain occupies 271-524 (LQLIKRLGNG…YLQGFLEDYF (254 aa)). ATP contacts are provided by residues 277-285 (LGNGQFGEV) and Lys299. The active-site Proton acceptor is Asp390. At Tyr420 the chain carries Phosphotyrosine; by autocatalysis. Tyr531 bears the Phosphotyrosine mark.

It belongs to the protein kinase superfamily. Tyr protein kinase family. SRC subfamily. As to quaternary structure, interacts (via its SH3 domain) with PIK3R1 and PRMT8. Interacts with FYB1, PAG1, and SH2D1A. Interacts with CD79A (tyrosine-phosphorylated form); the interaction increases FYN activity. Interacts (via SH2 domain) with CSF1R (tyrosine phosphorylated). Interacts with TOM1L1 (phosphorylated form). Interacts with KDR (tyrosine phosphorylated). Interacts (via SH3 domain) with KLHL2 (via N-terminus). Interacts with SH2D1A and SLAMF1. Interacts with ITCH; the interaction phosphorylates ITCH and negatively regulates its activity. Interacts with FASLG. Interacts with RUNX3. Interacts with KIT. Interacts with EPHA8; possible downstream effector of EPHA8 in regulation of cell adhesion. Interacts with PTK2/FAK1; this interaction leads to PTK2/FAK1 phosphorylation and activation. Interacts with CAV1; this interaction couples integrins to the Ras-ERK pathway. Interacts with UNC119. Interacts (via SH2 domain) with PTPRH (phosphorylated form). Interacts with PTPRO (phosphorylated form). Interacts with PTPRB (phosphorylated form). Interacts with FYB2. Interacts with DSCAM. Interacts with SKAP1 and FYB1; this interaction promotes the phosphorylation of CLNK. Interacts with NEDD9; in the presence of PTK2. It depends on Mn(2+) as a cofactor. Post-translationally, autophosphorylated at Tyr-420. Phosphorylation on the C-terminal tail at Tyr-531 by CSK maintains the enzyme in an inactive state. PTPRC/CD45 dephosphorylates Tyr-531 leading to activation. Dephosphorylation at Tyr-420 by PTPN2 negatively regulates T-cell receptor signaling. Phosphorylated at tyrosine residues, which can be enhanced by NTN1. In terms of processing, palmitoylated. Palmitoylation at Cys-3 and Cys-6, probably by ZDHHC21, regulates subcellular location. In terms of tissue distribution, detected in spinal cord oligodendrocytes (at protein level).

The protein resides in the cytoplasm. It localises to the nucleus. Its subcellular location is the cell membrane. The protein localises to the perikaryon. The catalysed reaction is L-tyrosyl-[protein] + ATP = O-phospho-L-tyrosyl-[protein] + ADP + H(+). Its activity is regulated as follows. Inhibited by phosphorylation of Tyr-531 by leukocyte common antigen and activated by dephosphorylation of this site. In terms of biological role, non-receptor tyrosine-protein kinase that plays a role in many biological processes including regulation of cell growth and survival, cell adhesion, integrin-mediated signaling, cytoskeletal remodeling, cell motility, immune response and axon guidance. Inactive FYN is phosphorylated on its C-terminal tail within the catalytic domain. Following activation by PKA, the protein subsequently associates with PTK2/FAK1, allowing PTK2/FAK1 phosphorylation, activation and targeting to focal adhesions. Involved in the regulation of cell adhesion and motility through phosphorylation of CTNNB1 (beta-catenin) and CTNND1 (delta-catenin). Regulates cytoskeletal remodeling by phosphorylating several proteins including the actin regulator WAS and the microtubule-associated proteins MAP2 and MAPT. Promotes cell survival by phosphorylating AGAP2/PIKE-A and preventing its apoptotic cleavage. Participates in signal transduction pathways that regulate the integrity of the glomerular slit diaphragm (an essential part of the glomerular filter of the kidney) by phosphorylating several slit diaphragm components including NPHS1, KIRREL1 and TRPC6. Plays a role in neural processes by phosphorylating DPYSL2, a multifunctional adapter protein within the central nervous system, ARHGAP32, a regulator for Rho family GTPases implicated in various neural functions, and SNCA, a small pre-synaptic protein. Involved in reelin signaling by mediating phosphorylation of DAB1 following reelin (RELN)-binding to its receptor. Participates in the downstream signaling pathways that lead to T-cell differentiation and proliferation following T-cell receptor (TCR) stimulation. Phosphorylates PTK2B/PYK2 in response to T-cell receptor activation. Also participates in negative feedback regulation of TCR signaling through phosphorylation of PAG1, thereby promoting interaction between PAG1 and CSK and recruitment of CSK to lipid rafts. CSK maintains LCK and FYN in an inactive form. Promotes CD28-induced phosphorylation of VAV1. In mast cells, phosphorylates CLNK after activation of immunoglobulin epsilon receptor signaling. Can also promote CD244-mediated NK cell activation. The polypeptide is Tyrosine-protein kinase Fyn (Rattus norvegicus (Rat)).